The sequence spans 498 residues: MSHNEKIQDENKLIAERRQKLQKIRDTQKIAFPNDARPTHKAAQLHRDFDHGDEAALSQAGTVAIAGRMMGKRVMGKASFVHVQDGSGEQIQLYVSSDALTEEVYEEFKTWDVGDIIFASGSLFRTKTGELTVQTNAIRLLTKSLRPLPDKFHGLTDQEIRYRQRYVDLMVNAQSRDVFKARSKIISYIRHFFEARDFLEVETPMMHPIPGGAAAKPFITHHNALDMPLYLRIAPELYLKRLVVGGFERVFEINRNFRNEGVSARHNPEFTMLEFYQAYADYNDLMDLSEVLFQGLAQTILGTTKFDYQGTEIDFSQFRRLPMRDAVCQYVPEAANILEDAPKMVQLLKEKFHIDAGNESDCGKLMTMIFEEGVEHLLIQPTFVIEYPAVVSPLSRRNDENPDITDRFELFIGGREIANGFSELNDAEDQAERFKEQAAAFEAGDEEAMHYDGDFVRALEYGLPPTAGQGIGIDRLVMLLTNAPSIRDVLLFPHMRPE.

2 residues coordinate Mg(2+): E409 and E416.

The protein belongs to the class-II aminoacyl-tRNA synthetase family. Homodimer. Requires Mg(2+) as cofactor.

It is found in the cytoplasm. The catalysed reaction is tRNA(Lys) + L-lysine + ATP = L-lysyl-tRNA(Lys) + AMP + diphosphate. This chain is Lysine--tRNA ligase, found in Dichelobacter nodosus (strain VCS1703A).